We begin with the raw amino-acid sequence, 421 residues long: GTPase Obg (421 aa).

The Obg domain occupies 1–158 (MFIDVAKIEL…KTIKLELKLL (158 aa)). Residues 21–40 (AFRREKYEPSGGPAGGDGGD) form a disordered region. Residues 159 to 328 (ADVGLIGLPN…LMYLIADTLD (170 aa)) form the OBG-type G domain. GTP-binding positions include 165-172 (GLPNVGKS), 190-194 (FTTLE), 211-214 (DIPG), 281-284 (NKTD), and 309-311 (SAA). Ser172 and Thr192 together coordinate Mg(2+). The OCT domain occupies 344–421 (FEEEKEPDFK…IGDVEFDFYE (78 aa)).

It belongs to the TRAFAC class OBG-HflX-like GTPase superfamily. OBG GTPase family. As to quaternary structure, monomer. It depends on Mg(2+) as a cofactor.

It localises to the cytoplasm. Its function is as follows. An essential GTPase which binds GTP, GDP and possibly (p)ppGpp with moderate affinity, with high nucleotide exchange rates and a fairly low GTP hydrolysis rate. Plays a role in control of the cell cycle, stress response, ribosome biogenesis and in those bacteria that undergo differentiation, in morphogenesis control. This chain is GTPase Obg, found in Finegoldia magna (strain ATCC 29328 / DSM 20472 / WAL 2508) (Peptostreptococcus magnus).